The primary structure comprises 413 residues: Snake venom metalloproteinase AaPA (413 aa).

Residues 1 to 20 (MIQVLLVTICLAAFPYQGSS) form the signal peptide. The propeptide occupies 21–189 (IILESGKVND…KKASQLIVST (169 aa)). One can recognise a Peptidase M12B domain in the interval 193 to 390 (RYMEIVIVVD…ENPPCILNKP (198 aa)). Residues E196 and D280 each coordinate Ca(2+). Disulfide bonds link C304/C385, C344/C369, and C346/C352. Residue H329 participates in Zn(2+) binding. E330 is a catalytic residue. Zn(2+) contacts are provided by H333 and H339. The Ca(2+) site is built by C385, N388, V400, N403, L405, E407, and D413. Positions 391 to 413 (LRTDTVSTPVSGNELLEAEKDYD) are excised as a propeptide.

This sequence belongs to the venom metalloproteinase (M12B) family. P-I subfamily. Monomer. The cofactor is Zn(2+). In terms of tissue distribution, expressed by the venom gland.

The protein resides in the secreted. In terms of biological role, snake venom zinc metalloprotease that may activate prothrombin. This chain is Snake venom metalloproteinase AaPA, found in Deinagkistrodon acutus (Hundred-pace snake).